Consider the following 104-residue polypeptide: Cytochrome c6 (104 aa).

The signal sequence occupies residues 1–20 (MKSLLTFILTTIFCIQQVWA). Heme c contacts are provided by C34, C37, H38, and M78.

It belongs to the cytochrome c family. PetJ subfamily. Monomer. Binds 1 heme c group covalently per subunit.

It localises to the plastid. The protein localises to the chloroplast thylakoid lumen. Functions as an electron carrier between membrane-bound cytochrome b6-f and photosystem I in oxygenic photosynthesis. In Cyanidioschyzon merolae (strain NIES-3377 / 10D) (Unicellular red alga), this protein is Cytochrome c6.